Here is a 262-residue protein sequence, read N- to C-terminus: MTKQFAVIGNPIEQSRSPELHHAFAEKTGVDLNYQKRLAPLDGFESSMRSFFAEGGSGMNVTVPFKEQAFALCDVLTERAQIAKAVNTLWMENGKLHGDNTDGQGLVAAIQALEWNLENTTILILGAGGATRGVIYPLVQAGTQKIVIANRTLARAEQLVDDLKTAVPQAQLQAISLNDLEGDFDIVINATSASLSGDALQLPEKLQFKYAYEMAYGKPSSFLDQAKQRNVPYSEGFGMLVGQAIEAFYIWNGVRPQLKDFL.

Residues 15-17 and Thr-62 each bind shikimate; that span reads SRS. Lys-66 acts as the Proton acceptor in catalysis. Glu-78 contacts NADP(+). Shikimate contacts are provided by Asn-87 and Asp-102. Residues 126 to 130, 150 to 155, and Met-214 each bind NADP(+); these read GAGGA and NRTLAR. Tyr-216 contributes to the shikimate binding site. Gly-236 is an NADP(+) binding site.

Belongs to the shikimate dehydrogenase family. In terms of assembly, homodimer.

It catalyses the reaction shikimate + NADP(+) = 3-dehydroshikimate + NADPH + H(+). Its pathway is metabolic intermediate biosynthesis; chorismate biosynthesis; chorismate from D-erythrose 4-phosphate and phosphoenolpyruvate: step 4/7. Its function is as follows. Involved in the biosynthesis of the chorismate, which leads to the biosynthesis of aromatic amino acids. Catalyzes the reversible NADPH linked reduction of 3-dehydroshikimate (DHSA) to yield shikimate (SA). The polypeptide is Shikimate dehydrogenase (NADP(+)) (Acinetobacter baumannii (strain ATCC 17978 / DSM 105126 / CIP 53.77 / LMG 1025 / NCDC KC755 / 5377)).